A 328-amino-acid polypeptide reads, in one-letter code: DNA-directed RNA polymerase subunit alpha (328 aa).

Residues 1–231 (MIYQMQMPEK…EHVSLFANFS (231 aa)) are alpha N-terminal domain (alpha-NTD). The alpha C-terminal domain (alpha-CTD) stretch occupies residues 252–328 (MRKMLLTRIE…MDITKYQMKG (77 aa)).

Belongs to the RNA polymerase alpha chain family. In terms of assembly, homodimer. The RNAP catalytic core consists of 2 alpha, 1 beta, 1 beta' and 1 omega subunit. When a sigma factor is associated with the core the holoenzyme is formed, which can initiate transcription.

The catalysed reaction is RNA(n) + a ribonucleoside 5'-triphosphate = RNA(n+1) + diphosphate. Its function is as follows. DNA-dependent RNA polymerase catalyzes the transcription of DNA into RNA using the four ribonucleoside triphosphates as substrates. The sequence is that of DNA-directed RNA polymerase subunit alpha from Chlorobium phaeobacteroides (strain BS1).